An 869-amino-acid polypeptide reads, in one-letter code: Iron-sulfur cluster assembly SufBD family protein ML0593 (869 aa).

A DOD-type homing endonuclease domain is found at 344 to 477 (LLGLWLGDGH…VRQLAIGCGL (134 aa)).

This sequence belongs to the iron-sulfur cluster assembly SufBD family. This protein undergoes a protein self splicing that involves a post-translational excision of the intervening region (intein) followed by peptide ligation.

This Mycobacterium leprae (strain TN) protein is Iron-sulfur cluster assembly SufBD family protein ML0593.